The following is a 557-amino-acid chain: Organic cation/carnitine transporter 2 (557 aa).

Over methionine 1–leucine 20 the chain is Cytoplasmic. Residues isoleucine 21–phenylalanine 41 form a helical membrane-spanning segment. The Extracellular portion of the chain corresponds to leucine 42–alanine 142. Asparagine 57, asparagine 64, and asparagine 91 each carry an N-linked (GlcNAc...) asparagine glycan. Residues proline 143–leucine 163 traverse the membrane as a helical segment. Topologically, residues serine 164–valine 172 are cytoplasmic. A helical membrane pass occupies residues leucine 173 to phenylalanine 193. Residues glutamate 194–valine 197 are Extracellular-facing. A helical membrane pass occupies residues valine 198–glycine 218. Position 218–225 (glycine 218–serine 225) interacts with ATP. Residues threonine 219–threonine 232 are Cytoplasmic-facing. A helical membrane pass occupies residues leucine 233–isoleucine 253. The Extracellular portion of the chain corresponds to arginine 254–arginine 257. The chain crosses the membrane as a helical span at residues methionine 258–proline 278. At glutamate 279–arginine 341 the chain is on the cytoplasmic side. A helical membrane pass occupies residues methionine 342–serine 362. Residues leucine 363 to phenylalanine 373 lie on the Extracellular side of the membrane. Residues valine 374–leucine 394 traverse the membrane as a helical segment. Residues glutamine 395 to alanine 406 lie on the Cytoplasmic side of the membrane. A helical membrane pass occupies residues leucine 407–leucine 427. The Extracellular portion of the chain corresponds to alanine 428 to valine 430. Residues leucine 431–alanine 451 traverse the membrane as a helical segment. Over glutamate 452 to glycine 462 the chain is Cytoplasmic. The chain crosses the membrane as a helical span at residues valine 463 to leucine 483. The Extracellular portion of the chain corresponds to glycine 484–arginine 488. Tyrosine 486 carries the post-translational modification Phosphotyrosine. A helical membrane pass occupies residues phenylalanine 489–leucine 509. The disordered stretch occupies residues threonine 535 to phenylalanine 557. Threonine 550 carries the post-translational modification Phosphothreonine.

Belongs to the major facilitator (TC 2.A.1) superfamily. Organic cation transporter (TC 2.A.1.19) family. Interacts with PDZK1. Post-translationally, glycosylated. Glycosylation affects the expression levels. Not glycosylated. Strongly expressed in kidney, skeletal muscle, heart and placenta. Primarily expressed by surface epithelial cells of the colon (at protein level). Expressed in CD68 macrophage and CD43 T-cells but not in CD20 B-cells. In testis, localized to Sertoli cell basal membranes, peritubular myoid cells and Leydig cells.

It is found in the cell membrane. The protein localises to the apical cell membrane. It localises to the basal cell membrane. The protein resides in the endoplasmic reticulum. The catalysed reaction is (R)-carnitine(out) + Na(+)(out) = (R)-carnitine(in) + Na(+)(in). The enzyme catalyses glycine betaine(out) + Na(+)(out) = glycine betaine(in) + Na(+)(in). It carries out the reaction glycine betaine(out) + (R)-carnitine(in) = glycine betaine(in) + (R)-carnitine(out). It catalyses the reaction O-butanoyl-(R)-carnitine(out) + Na(+)(out) = O-butanoyl-(R)-carnitine(in) + Na(+)(in). The catalysed reaction is O-acetyl-(R)-carnitine(out) + Na(+)(out) = O-acetyl-(R)-carnitine(in) + Na(+)(in). The enzyme catalyses O-propanoyl-(R)-carnitine(out) + Na(+)(out) = O-propanoyl-(R)-carnitine(in) + Na(+)(in). It carries out the reaction (S)-carnitine(out) + Na(+)(out) = (S)-carnitine(in) + Na(+)(in). It catalyses the reaction an O-acyl-(R)-carnitine(out) + Na(+)(out) = an O-acyl-(R)-carnitine(in) + Na(+)(in). The catalysed reaction is L-glutamyl-L-arginyl-glycyl-L-methionyl-L-threonine(out) + Na(+)(out) = L-glutamyl-L-arginyl-glycyl-L-methionyl-L-threonine(in) + Na(+)(in). The enzyme catalyses N,N-dimethylglycine(out) + Na(+)(out) = N,N-dimethylglycine(in) + Na(+)(in). With respect to regulation, inhibited by emetine, quinidine and verapamil. The IC(50) of emetine is 4.2 uM. Not inhibited by valproic acid. Transport of (R)-carnitine is stimulated by cholesterol in the plasma membrane. In terms of biological role, sodium-ion dependent, high affinity carnitine transporter. Involved in the active cellular uptake of carnitine. Transports one sodium ion with one molecule of carnitine. Also transports organic cations such as tetraethylammonium (TEA) without the involvement of sodium. Relative uptake activity ratio of carnitine to TEA is 11.3. In intestinal epithelia, transports the quorum-sensing pentapeptide CSF (competence and sporulation factor) from B.subtilis which induces cytoprotective heat shock proteins contributing to intestinal homeostasis. May also contribute to regulate the transport of organic compounds in testis across the blood-testis-barrier. Its function is as follows. Retained in the ER, unable to perform carnitine uptake. The sequence is that of Organic cation/carnitine transporter 2 from Homo sapiens (Human).